We begin with the raw amino-acid sequence, 86 residues long: Large ribosomal subunit protein bL31B (86 aa).

This sequence belongs to the bacterial ribosomal protein bL31 family. Type B subfamily. In terms of assembly, part of the 50S ribosomal subunit.

In Vibrio parahaemolyticus serotype O3:K6 (strain RIMD 2210633), this protein is Large ribosomal subunit protein bL31B.